We begin with the raw amino-acid sequence, 205 residues long: Holliday junction branch migration complex subunit RuvA (205 aa).

Residues 1–64 are domain I; sequence MIGKLKGLID…EDQIKLFGFR (64 aa). The domain II stretch occupies residues 65-143; that stretch reads TDHEREWFRL…ALSNVDPAVV (79 aa). Positions 144 to 154 are flexible linker; that stretch reads QLSGALDDNRA. A domain III region spans residues 154–205; that stretch reads APRPVTDAISALVNLGYGQPQAAAAIAAAARAAGDDAATAQLIKLGLKELSK.

This sequence belongs to the RuvA family. In terms of assembly, homotetramer. Forms an RuvA(8)-RuvB(12)-Holliday junction (HJ) complex. HJ DNA is sandwiched between 2 RuvA tetramers; dsDNA enters through RuvA and exits via RuvB. An RuvB hexamer assembles on each DNA strand where it exits the tetramer. Each RuvB hexamer is contacted by two RuvA subunits (via domain III) on 2 adjacent RuvB subunits; this complex drives branch migration. In the full resolvosome a probable DNA-RuvA(4)-RuvB(12)-RuvC(2) complex forms which resolves the HJ.

It localises to the cytoplasm. In terms of biological role, the RuvA-RuvB-RuvC complex processes Holliday junction (HJ) DNA during genetic recombination and DNA repair, while the RuvA-RuvB complex plays an important role in the rescue of blocked DNA replication forks via replication fork reversal (RFR). RuvA specifically binds to HJ cruciform DNA, conferring on it an open structure. The RuvB hexamer acts as an ATP-dependent pump, pulling dsDNA into and through the RuvAB complex. HJ branch migration allows RuvC to scan DNA until it finds its consensus sequence, where it cleaves and resolves the cruciform DNA. The sequence is that of Holliday junction branch migration complex subunit RuvA from Rhodopseudomonas palustris (strain BisB5).